A 226-amino-acid chain; its full sequence is Fibrillarin-like rRNA/tRNA 2'-O-methyltransferase (226 aa).

Residues 85 to 86 (TT), 104 to 105 (EF), 129 to 130 (DA), and 149 to 152 (DVAQ) contribute to the S-adenosyl-L-methionine site.

It belongs to the methyltransferase superfamily. Fibrillarin family. In terms of assembly, interacts with nop5. Component of box C/D small ribonucleoprotein (sRNP) particles that contain rpl7ae, FlpA and nop5, plus a guide RNA.

In terms of biological role, involved in pre-rRNA and tRNA processing. Utilizes the methyl donor S-adenosyl-L-methionine to catalyze the site-specific 2'-hydroxyl methylation of ribose moieties in rRNA and tRNA. Site specificity is provided by a guide RNA that base pairs with the substrate. Methylation occurs at a characteristic distance from the sequence involved in base pairing with the guide RNA. The chain is Fibrillarin-like rRNA/tRNA 2'-O-methyltransferase from Thermococcus gammatolerans (strain DSM 15229 / JCM 11827 / EJ3).